A 132-amino-acid chain; its full sequence is UPF0299 membrane protein YohJ (132 aa).

Helical transmembrane passes span 7–27 (IIWQ…AGIF), 31–51 (LLPV…VLLA), 63–83 (GCYV…VGVM), and 93–113 (FGPV…VVSW).

The protein belongs to the UPF0299 family.

It is found in the cell inner membrane. The polypeptide is UPF0299 membrane protein YohJ (Shigella boydii serotype 18 (strain CDC 3083-94 / BS512)).